A 293-amino-acid chain; its full sequence is 33 kDa chaperonin (293 aa).

Disulfide bonds link Cys-229/Cys-231 and Cys-262/Cys-265.

Belongs to the HSP33 family. In terms of processing, under oxidizing conditions two disulfide bonds are formed involving the reactive cysteines. Under reducing conditions zinc is bound to the reactive cysteines and the protein is inactive.

The protein localises to the cytoplasm. Redox regulated molecular chaperone. Protects both thermally unfolding and oxidatively damaged proteins from irreversible aggregation. Plays an important role in the bacterial defense system toward oxidative stress. This chain is 33 kDa chaperonin, found in Methylobacillus flagellatus (strain ATCC 51484 / DSM 6875 / VKM B-1610 / KT).